The chain runs to 380 residues: MYIEMAQQQQQSGSDNSMAPVWIVILLFITAYFVWALAHQYIVSFVFTINIWQARLVNLFLNNQLLANQIYLMQTLDPNTVNWDQMVTVMRAVGDYMRYPVICILVVLAFVLYNSNVTLKYRKTYDMKSLRAQEQFNWPAIMPIVKEDLVSQDVNKGPWAMALTPMEFARKYNLLRKDDALLDNPVPGEEMTAGIRRGDAKRVFTMQLGPYWDGFERCSPQAYALSAVFMARMNRDRDAANNILKVLDKTFVDGKPDFSVARPVMKKYQNSELVQEVVAKHAYVLTVIASLLEAAREDGVVPSSEFLWLKPVDRRLWYMLNCVGRQTPYSEVAGPFAHWKAEKEMGRRSLVPMIDEAIRALEIAVKEVRLTPRQMEELEP.

2 helical membrane passes run 18-38 and 99-119; these read MAPV…WALA and YPVI…NVTL.

The T4BSS is a complex nanomachine composed of several subcomplexes. This subunit is part of the Type IV Coupling Complex (T4CC), a subcomplex composed of the DotLMNYZ core and the IcmSW-LvgA adapter subunits, linked by the C-terminal tail of DotL. Six DotLMNYZ hetero-pentameric units may assemble into a hexameric nanomachine, forming an inner membrane channel for effectors to pass through. Interacts directly with DotL.

It is found in the cell inner membrane. In terms of biological role, component of the Dot/Icm type IVB secretion system (T4BSS), which is used to inject bacterial effector proteins into eukaryotic host cells. Part of a subcomplex which recruits effector proteins and delivers them to the core transmembrane subcomplex. Forms the interacting surface for recruitment of acidic Glu-rich motif-containing effectors. This Legionella pneumophila subsp. pneumophila (strain Philadelphia 1 / ATCC 33152 / DSM 7513) protein is Type 4 apparatus protein DotM.